Here is a 319-residue protein sequence, read N- to C-terminus: Beta-ketoacyl-[acyl-carrier-protein] synthase III (319 aa).

Residues C113 and H246 contribute to the active site. The ACP-binding stretch occupies residues 247-251 (QANIR). N276 is an active-site residue.

Belongs to the thiolase-like superfamily. FabH family. As to quaternary structure, homodimer.

It is found in the cytoplasm. It catalyses the reaction malonyl-[ACP] + acetyl-CoA + H(+) = 3-oxobutanoyl-[ACP] + CO2 + CoA. It functions in the pathway lipid metabolism; fatty acid biosynthesis. In terms of biological role, catalyzes the condensation reaction of fatty acid synthesis by the addition to an acyl acceptor of two carbons from malonyl-ACP. Catalyzes the first condensation reaction which initiates fatty acid synthesis and may therefore play a role in governing the total rate of fatty acid production. Possesses both acetoacetyl-ACP synthase and acetyl transacylase activities. Its substrate specificity determines the biosynthesis of branched-chain and/or straight-chain of fatty acids. This is Beta-ketoacyl-[acyl-carrier-protein] synthase III from Ehrlichia ruminantium (strain Welgevonden).